We begin with the raw amino-acid sequence, 374 residues long: Negative elongation factor E (374 aa).

Residues 7–36 (GLSEEEEALQKKFNKLKKKKKALLALKKQS) adopt a coiled-coil conformation. Residues 30-43 (LALKKQSSSSTASQ) show a composition bias toward low complexity. The disordered stretch occupies residues 30-58 (LALKKQSSSSTASQGGVKRSLSEQPVVDT). Residue Ser-51 is modified to Phosphoserine. Lys-78 participates in a covalent cross-link: Glycyl lysine isopeptide (Lys-Gly) (interchain with G-Cter in SUMO1); alternate. Residue Lys-78 forms a Glycyl lysine isopeptide (Lys-Gly) (interchain with G-Cter in SUMO2); alternate linkage. The tract at residues 79 to 252 (AETKNSGFKR…SDSFPERRAP (174 aa)) is disordered. Lys-82 participates in a covalent cross-link: Glycyl lysine isopeptide (Lys-Gly) (interchain with G-Cter in SUMO2). Residues 90–101 (RTLEGKLKDPEK) are compositionally biased toward basic and acidic residues. Ser-113 and Ser-115 each carry phosphoserine. The residue at position 122 (Glu-122) is a PolyADP-ribosyl glutamic acid. 2 positions are modified to phosphoserine: Ser-131 and Ser-139. Glu-151 carries the polyADP-ribosyl glutamic acid modification. Ser-165 is subject to Phosphoserine. Position 172 is a polyADP-ribosyl glutamic acid (Glu-172). 4 positions are modified to phosphoserine: Ser-179, Ser-181, Ser-185, and Ser-187. A run of 27 repeats spans residues 184 to 185 (RS), 186 to 187 (RS), 188 to 189 (RD), 190 to 191 (RS), 192 to 193 (RE), 194 to 195 (RN), 196 to 197 (RD), 198 to 199 (RD), 200 to 201 (RD), 202 to 203 (RD), 204 to 205 (RE), 206 to 207 (RD), 208 to 209 (RE), 210 to 211 (RD), 212 to 213 (RD), 214 to 215 (RD), 216 to 217 (RD), 218 to 219 (RE), 220 to 221 (RD), 222 to 223 (RD), 224 to 225 (RD), 226 to 227 (RD), 228 to 229 (RD), 230 to 231 (RD), 232 to 233 (RE), 234 to 235 (RD), and 236 to 237 (RE). Positions 184–237 (RSRSRDRSRERNRDRDRDRDRERDRERDRDRDRDRERDRDRDRDRDRDRERDRE) are 27 X 2 AA approximate tandem repeats of R-[DSNE]. Over residues 186–250 (RSRDRSRERN…RRSDSFPERR (65 aa)) the composition is skewed to basic and acidic residues. Ser-191 carries the post-translational modification Phosphoserine. Ser-243 and Ser-245 each carry phosphoserine. The region spanning 256 to 326 (NTLYVYGEDM…VQLKVSIARK (71 aa)) is the RRM domain. Phosphothreonine is present on residues Thr-266 and Thr-268. Ser-275 and Ser-347 each carry phosphoserine. At Glu-368 the chain carries PolyADP-ribosyl glutamic acid.

It belongs to the RRM NELF-E family. In terms of assembly, the NELF complex is composed of NELFA, NELFB, NELFCD and NELFE. Interacts with NELFB. Post-translationally, phosphorylated by the P-TEFb complex at sites next to its RNA recognition motif, promoting its release from chromatin. In terms of processing, sumoylated. Poly-ADP-ribosylated by PARP1, thereby preventing RNA-binding and relieving transcription pausing.

The protein localises to the nucleus. It is found in the chromosome. Functionally, essential component of the NELF complex, a complex that negatively regulates the elongation of transcription by RNA polymerase II. The NELF complex, which acts via an association with the DSIF complex and causes transcriptional pausing, is counteracted by the P-TEFb kinase complex. Provides the strongest RNA binding activity of the NELF complex and may initially recruit the NELF complex to RNA. The sequence is that of Negative elongation factor E (NELFE) from Bos taurus (Bovine).